The following is a 207-amino-acid chain: Large ribosomal subunit protein uL4 (207 aa).

The tract at residues 43–80 (RRRSGTAKSKGRSEVSGSTRKLYRQKGTGNARSGSVKS) is disordered. Residues 69–78 (GTGNARSGSV) are compositionally biased toward polar residues.

The protein belongs to the universal ribosomal protein uL4 family. As to quaternary structure, part of the 50S ribosomal subunit.

Functionally, one of the primary rRNA binding proteins, this protein initially binds near the 5'-end of the 23S rRNA. It is important during the early stages of 50S assembly. It makes multiple contacts with different domains of the 23S rRNA in the assembled 50S subunit and ribosome. Forms part of the polypeptide exit tunnel. In Desulforapulum autotrophicum (strain ATCC 43914 / DSM 3382 / VKM B-1955 / HRM2) (Desulfobacterium autotrophicum), this protein is Large ribosomal subunit protein uL4.